We begin with the raw amino-acid sequence, 490 residues long: Subtilisin-like protease 8 (490 aa).

A signal peptide spans 1 to 26; that stretch reads MKGLLSLSVLPVLAYASPMIVDSIHQ. Residues 27–134 constitute a propeptide that is removed on maturation; it reads DAAPILSSTN…YIERDSEVRA (108 aa). The Inhibitor I9 domain maps to 43–133; that stretch reads SYIVVFKKGV…EYIERDSEVR (91 aa). Positions 144 to 450 constitute a Peptidase S8 domain; the sequence is PWGLARISHR…GGSDNYKEIV (307 aa). Residues Asp180 and His212 each act as charge relay system in the active site. Asn282 carries an N-linked (GlcNAc...) asparagine glycan. The active-site Charge relay system is the Ser378. Asn455 carries an N-linked (GlcNAc...) asparagine glycan.

This sequence belongs to the peptidase S8 family.

It is found in the secreted. In terms of biological role, secreted subtilisin-like serine protease with keratinolytic activity that contributes to pathogenicity. This Arthroderma otae (strain ATCC MYA-4605 / CBS 113480) (Microsporum canis) protein is Subtilisin-like protease 8 (SUB8).